Here is a 121-residue protein sequence, read N- to C-terminus: Large ribosomal subunit protein uL14 (121 aa).

This sequence belongs to the universal ribosomal protein uL14 family. Part of the 50S ribosomal subunit. Forms a cluster with proteins L3 and L19. In the 70S ribosome, L14 and L19 interact and together make contacts with the 16S rRNA in bridges B5 and B8.

In terms of biological role, binds to 23S rRNA. Forms part of two intersubunit bridges in the 70S ribosome. This chain is Large ribosomal subunit protein uL14, found in Prochlorococcus marinus (strain MIT 9211).